Here is a 439-residue protein sequence, read N- to C-terminus: Chaperone SurA (439 aa).

An N-terminal signal peptide occupies residues 1-27 (MRRISSRLSLVLFAALSCATALFPAHA). 2 PpiC domains span residues 180 to 281 (GEEF…KLLD) and 293 to 391 (LEQT…QVEA).

It is found in the periplasm. It catalyses the reaction [protein]-peptidylproline (omega=180) = [protein]-peptidylproline (omega=0). In terms of biological role, chaperone involved in the correct folding and assembly of outer membrane proteins. Recognizes specific patterns of aromatic residues and the orientation of their side chains, which are found more frequently in integral outer membrane proteins. May act in both early periplasmic and late outer membrane-associated steps of protein maturation. The protein is Chaperone SurA of Aromatoleum aromaticum (strain DSM 19018 / LMG 30748 / EbN1) (Azoarcus sp. (strain EbN1)).